Here is a 433-residue protein sequence, read N- to C-terminus: Alpha-(1,3)-fucosyltransferase 4 (433 aa).

The tract at residues 1–20 is disordered; it reads MAPAGRKLQHESRCRPSRPV. Residues 1–54 lie on the Cytoplasmic side of the membrane; the sequence is MAPAGRKLQHESRCRPSRPVDAWRAAATTRGRCMGTPGARRTARRGGWGLPRTS. Residues 55–74 traverse the membrane as a helical; Signal-anchor for type II membrane protein segment; sequence SGLAAAGLLCTALTACLCWG. Over 75–433 the chain is Lumenal; that stretch reads QLPPLPWASP…IHNLADWFQR (359 aa). Residues Asn-117 and Asn-218 are each glycosylated (N-linked (GlcNAc...) asparagine).

This sequence belongs to the glycosyltransferase 10 family. As to expression, in adult, highest expression in spleen, testis, brain, lung, kidney and skeletal muscle and to a lesser extent in liver and heart.

The protein resides in the golgi apparatus. The protein localises to the golgi stack membrane. The enzyme catalyses a beta-D-galactosyl-(1-&gt;4)-N-acetyl-beta-D-glucosaminyl derivative + GDP-beta-L-fucose = a beta-D-galactosyl-(1-&gt;4)-[alpha-L-fucosyl-(1-&gt;3)]-N-acetyl-beta-D-glucosaminyl derivative + GDP + H(+). The catalysed reaction is an N-acetyl-alpha-neuraminyl-(2-&gt;3)-beta-D-galactosyl-(1-&gt;4)-N-acetyl-beta-D-glucosaminyl derivative + GDP-beta-L-fucose = an alpha-Neu5Ac-(2-&gt;3)-beta-D-Gal-(1-&gt;4)-[alpha-L-Fuc-(1-&gt;3)]-beta-D-GlcNAc derivative + GDP + H(+). It carries out the reaction an alpha-Neu5Ac-(2-&gt;3)-beta-D-Gal-(1-&gt;4)-beta-D-GlcNAc-(1-&gt;3)-beta-D-Gal-(1-&gt;4)-beta-D-GlcNAc derivative + GDP-beta-L-fucose = an alpha-Neu5Ac-(2-&gt;3)-beta-D-Gal-(1-&gt;4)-beta-D-GlcNAc-(1-&gt;3)-beta-D-Gal-(1-&gt;4)-[alpha-L-Fuc-(1-&gt;3)]-beta-D-GlcNAc derivative + GDP + H(+). It catalyses the reaction an alpha-Neu5Ac-(2-&gt;3)-beta-D-Gal-(1-&gt;4)-beta-D-GlcNAc6S derivative + GDP-beta-L-fucose = an alpha-Neu5Ac-(2-&gt;3)-beta-D-Gal-(1-&gt;4)-[alpha-L-Fuc-(1-&gt;3)]-beta-D-GlcNAc6S derivative + GDP + H(+). It functions in the pathway protein modification; protein glycosylation. Catalyzes alpha(1-&gt;3) linkage of fucosyl moiety transferred from GDP-beta-L-fucose to N-acetyl glucosamine (GlcNAc) within type 2 lactosamine (LacNAc, Gal-beta(1-&gt;4)GlcNAc) glycan attached to N- or O-linked glycoproteins. Robustly fucosylates nonsialylated distal LacNAc unit of the polylactosamine chain to form Lewis X antigen (CD15), a glycan determinant known to mediate important cellular functions in development and immunity. Fucosylates with lower efficiency sialylated LacNAc acceptors to form sialyl Lewis X and 6-sulfo sialyl Lewis X determinants that serve as recognition epitopes for C-type lectins. Together with FUT7 contributes to SELE, SELL and SELP selectin ligand biosynthesis and selectin-dependent lymphocyte homing, leukocyte migration and blood leukocyte homeostasis. In a cell type specific manner, may also fucosylate the internal LacNAc unit of the polylactosamine chain to form VIM-2 antigen that serves as recognition epitope for SELE. In Rattus norvegicus (Rat), this protein is Alpha-(1,3)-fucosyltransferase 4 (Fut4).